Reading from the N-terminus, the 393-residue chain is Cysteine desulfurase (393 aa).

Residues glycine 76–threonine 77, asparagine 155, glutamine 183, and serine 203–histidine 205 each bind pyridoxal 5'-phosphate. Position 206 is an N6-(pyridoxal phosphate)lysine (lysine 206). Residue threonine 241 coordinates pyridoxal 5'-phosphate. Cysteine 328 (cysteine persulfide intermediate) is an active-site residue. Residue cysteine 328 participates in [2Fe-2S] cluster binding.

The protein belongs to the class-V pyridoxal-phosphate-dependent aminotransferase family. NifS/IscS subfamily. In terms of assembly, homodimer. The cofactor is pyridoxal 5'-phosphate.

The enzyme catalyses (sulfur carrier)-H + L-cysteine = (sulfur carrier)-SH + L-alanine. Catalyzes the removal of elemental sulfur atoms from cysteine to produce alanine. Seems to participate in the biosynthesis of the nitrogenase metalloclusters by providing the inorganic sulfur required for the Fe-S core formation. This Bradyrhizobium diazoefficiens (strain JCM 10833 / BCRC 13528 / IAM 13628 / NBRC 14792 / USDA 110) protein is Cysteine desulfurase.